The following is a 2230-amino-acid chain: Golgin subfamily A member 4 (2230 aa).

Residues 1 to 64 (MFKKLKQKIS…SGDTQSFAQK (64 aa)) form a disordered region. Residue Ser10 is modified to Phosphoserine. The segment covering 12-41 (EQQQLQQALAPAQASSNSSTPTRMRSRTSS) has biased composition (low complexity). Thr39 is modified (phosphothreonine). A phosphoserine mark is found at Ser41, Ser71, Ser78, and Ser89. Over residues 87-107 (SSSKESLVRTSSRESLNRLDL) the composition is skewed to basic and acidic residues. Residues 87 to 127 (SSSKESLVRTSSRESLNRLDLDSSTASFDPPSDMDSEAEDL) are disordered. An interaction with MACF1 region spans residues 133–203 (SLNKEQLIQR…EELQMDQQAK (71 aa)). Residues 133 to 2185 (SLNKEQLIQR…EYLRKVLFEY (2053 aa)) are a coiled coil. A Phosphoserine modification is found at Ser266. N-linked (GlcNAc...) asparagine glycans are attached at residues Asn585 and Asn1612. The GRIP domain occupies 2168–2215 (LFGEPTEFEYLRKVLFEYMMGRETKTMAKVITTVLKFPDDQTQKILER). Position 2223 is a phosphothreonine (Thr2223).

Homodimer. Interacts with RAB6A. Interacts with GTP-bound ARL1 and ARL3. Interacts with MACF1. Directly interacts with TBC1D23. Interacts with FAM91A1; this interaction may be mediated by TBC1D23.

It is found in the cytoplasm. The protein localises to the golgi apparatus membrane. It localises to the golgi apparatus. The protein resides in the trans-Golgi network membrane. In terms of biological role, involved in vesicular trafficking at the Golgi apparatus level. May play a role in delivery of transport vesicles containing GPI-linked proteins from the trans-Golgi network through its interaction with MACF1. Involved in endosome-to-Golgi trafficking. The sequence is that of Golgin subfamily A member 4 (GOLGA4) from Homo sapiens (Human).